The primary structure comprises 223 residues: ATP phosphoribosyltransferase (223 aa).

The protein belongs to the ATP phosphoribosyltransferase family. Short subfamily. Heteromultimer composed of HisG and HisZ subunits.

The protein resides in the cytoplasm. It catalyses the reaction 1-(5-phospho-beta-D-ribosyl)-ATP + diphosphate = 5-phospho-alpha-D-ribose 1-diphosphate + ATP. It participates in amino-acid biosynthesis; L-histidine biosynthesis; L-histidine from 5-phospho-alpha-D-ribose 1-diphosphate: step 1/9. Functionally, catalyzes the condensation of ATP and 5-phosphoribose 1-diphosphate to form N'-(5'-phosphoribosyl)-ATP (PR-ATP). Has a crucial role in the pathway because the rate of histidine biosynthesis seems to be controlled primarily by regulation of HisG enzymatic activity. The sequence is that of ATP phosphoribosyltransferase from Halothermothrix orenii (strain H 168 / OCM 544 / DSM 9562).